The chain runs to 97 residues: C-C motif chemokine 8 (97 aa).

A signal peptide spans 1-23 (MKIYAVLLCLLLIAVPVSPEKLT). 2 cysteine pairs are disulfide-bonded: C32–C57 and C33–C73.

The protein belongs to the intercrine beta (chemokine CC) family. Monomer or homodimer; in equilibrium.

The protein localises to the secreted. Chemotactic factor that attracts monocytes. This protein can bind heparin. This chain is C-C motif chemokine 8 (Ccl8), found in Mus musculus (Mouse).